The chain runs to 1004 residues: Translation initiation factor IF-2 (1004 aa).

Residues 36 to 393 (SSTIEPPVVK…RQKRNEYESM (358 aa)) form a disordered region. Composition is skewed to low complexity over residues 62–157 (AAKP…AKPA) and 173–183 (AAKPGAEAPRP). 2 stretches are compositionally biased toward pro residues: residues 184–196 (GGMP…PAPK) and 219–236 (PRPG…PGGG). Gly residues-rich tracts occupy residues 237 to 249 (PRPQ…GGQR) and 261 to 277 (GNRG…GPRP). Over residues 279–303 (GGPRPQGGSRPQGGSAQGAQGAPSQ) the composition is skewed to low complexity. The segment covering 330–373 (GKGGRGGQAGGGAGGGFNRGGGTGGGAGRGGRRGGTAGAFGRPG) has biased composition (gly residues). Residues 377–386 (RRGRKSKRQK) are compositionally biased toward basic residues. Residues 499-671 (KRPPVVTVMG…VCLTADAELD (173 aa)) form the tr-type G domain. A G1 region spans residues 508–515 (GHVDHGKT). 508-515 (GHVDHGKT) contacts GTP. The G2 stretch occupies residues 533-537 (GITQG). The tract at residues 558–561 (DTPG) is G3. Residues 558-562 (DTPGH) and 612-615 (NKID) contribute to the GTP site. Positions 612–615 (NKID) are G4. The G5 stretch occupies residues 648 to 650 (SAK).

It belongs to the TRAFAC class translation factor GTPase superfamily. Classic translation factor GTPase family. IF-2 subfamily.

It is found in the cytoplasm. One of the essential components for the initiation of protein synthesis. Protects formylmethionyl-tRNA from spontaneous hydrolysis and promotes its binding to the 30S ribosomal subunits. Also involved in the hydrolysis of GTP during the formation of the 70S ribosomal complex. The polypeptide is Translation initiation factor IF-2 (Corynebacterium glutamicum (strain ATCC 13032 / DSM 20300 / JCM 1318 / BCRC 11384 / CCUG 27702 / LMG 3730 / NBRC 12168 / NCIMB 10025 / NRRL B-2784 / 534)).